A 104-amino-acid chain; its full sequence is Fluoride-specific ion channel FluC 2 (104 aa).

Transmembrane regions (helical) follow at residues 22-42 (IGPY…LAAV), 48-68 (LVMA…STLA), and 82-102 (MLLG…WCGL). Residues Gly59 and Ser62 each contribute to the Na(+) site.

The protein belongs to the fluoride channel Fluc/FEX (TC 1.A.43) family.

It is found in the cell membrane. It carries out the reaction fluoride(in) = fluoride(out). Na(+) is not transported, but it plays an essential structural role and its presence is essential for fluoride channel function. Fluoride-specific ion channel. Important for reducing fluoride concentration in the cell, thus reducing its toxicity. This Corynebacterium diphtheriae (strain ATCC 700971 / NCTC 13129 / Biotype gravis) protein is Fluoride-specific ion channel FluC 2.